The chain runs to 143 residues: Midkine (143 aa).

A signal peptide spans 1–20 (MQHRGFLLLTLLALLALTSA). Disulfide bonds link cysteine 37-cysteine 61, cysteine 45-cysteine 70, cysteine 52-cysteine 74, cysteine 84-cysteine 116, and cysteine 94-cysteine 126.

This sequence belongs to the pleiotrophin family. Homodimer. Interacts with ALK. Interacts with LRP1; promotes neuronal survival. Interacts with LRP2. Interacts with NCAM1. Interacts (via C-terminal) with PTPRZ1 (via chondroitin sulfate chains); this interaction is inhibited by PTN; this interaction promotes neuronal migration. Interacts with NCL; this interaction promotes NCL clustering and lateral movements of this complex into lipid rafts leading to MDK internalization. Interacts with LRP6 and LRP8: this interaction is calcium dependent. Interacts with ITGA4. Interacts with ITGA6. Interacts with ITGB1. Interacts with ITGA4:ITGB1 complex; this interaction mediates MDK-induced osteoblast cells migration through PXN phosphorylation. Interacts with ITGA6:ITGB1 complex; this interaction mediates MDK-induced neurite outgrowth. Interacts with NOTCH2; this interaction mediates a nuclear accumulation of NOTCH2 and therefore activation of NOTCH2 signaling leading to interaction between HES1 and STAT3. Interacts with GPC2 (via heparan sulfate chain); this interaction is inhibited by heparin followed by chondroitin sulfate E; this interaction induces GPC2 clustering through heparan sulfate chain; this interaction induces neuronal cell adhesion and neurite outgrowth. Interacts with SDC3; this interaction induces SDC3 clustering; this interaction induces neuronal cell adhesion and neurite outgrowth. Interacts with SDC1. Interacts with CSPG5; this interaction promotes elongation of oligodendroglial precursor-like cells. As to expression, expressed in various tumor cell lines. In insulinoma tissue predominantly expressed in precancerous lesions.

The protein resides in the secreted. In terms of biological role, secreted protein that functions as a cytokine and growth factor and mediates its signal through cell-surface proteoglycan and non-proteoglycan receptors. Binds cell-surface proteoglycan receptors via their chondroitin sulfate (CS) groups. Thereby regulates many processes like inflammatory response, cell proliferation, cell adhesion, cell growth, cell survival, tissue regeneration, cell differentiation and cell migration. Participates in inflammatory processes by exerting two different activities. Firstly, mediates neutrophils and macrophages recruitment to the sites of inflammation both by direct action by cooperating namely with ITGB2 via LRP1 and by inducing chemokine expression. This inflammation can be accompanied by epithelial cell survival and smooth muscle cell migration after renal and vessel damage, respectively. Secondly, suppresses the development of tolerogenic dendric cells thereby inhibiting the differentiation of regulatory T cells and also promote T cell expansion through NFAT signaling and Th1 cell differentiation. Promotes tissue regeneration after injury or trauma. After heart damage negatively regulates the recruitment of inflammatory cells and mediates cell survival through activation of anti-apoptotic signaling pathways via MAPKs and AKT pathways through the activation of angiogenesis. Also facilitates liver regeneration as well as bone repair by recruiting macrophage at trauma site and by promoting cartilage development by facilitating chondrocyte differentiation. Plays a role in brain by promoting neural precursor cells survival and growth through interaction with heparan sulfate proteoglycans. Binds PTPRZ1 and promotes neuronal migration and embryonic neurons survival. Binds SDC3 or GPC2 and mediates neurite outgrowth and cell adhesion. Binds chondroitin sulfate E and heparin leading to inhibition of neuronal cell adhesion induced by binding with GPC2. Binds CSPG5 and promotes elongation of oligodendroglial precursor-like cells. Also binds ITGA6:ITGB1 complex; this interaction mediates MDK-induced neurite outgrowth. Binds LRP1; promotes neuronal survival. Binds ITGA4:ITGB1 complex; this interaction mediates MDK-induced osteoblast cells migration through PXN phosphorylation. Binds anaplastic lymphoma kinase (ALK) which induces ALK activation and subsequent phosphorylation of the insulin receptor substrate (IRS1), followed by the activation of mitogen-activated protein kinase (MAPK) and PI3-kinase, and the induction of cell proliferation. Promotes epithelial to mesenchymal transition through interaction with NOTCH2. During arteriogenesis, plays a role in vascular endothelial cell proliferation by inducing VEGFA expression and release which in turn induces nitric oxide synthase expression. Moreover activates vasodilation through nitric oxide synthase activation. Negatively regulates bone formation in response to mechanical load by inhibiting Wnt/beta-catenin signaling in osteoblasts. In addition plays a role in hippocampal development, working memory, auditory response, early fetal adrenal gland development and the female reproductive system. The sequence is that of Midkine from Homo sapiens (Human).